We begin with the raw amino-acid sequence, 204 residues long: Ribosome maturation factor RimP (204 aa).

A disordered region spans residues 176–204; it reads GNFDESQFDEIEESEGEEADEAEQPPTKH. Acidic residues predominate over residues 181–198; that stretch reads SQFDEIEESEGEEADEAE.

The protein belongs to the RimP family.

The protein resides in the cytoplasm. Its function is as follows. Required for maturation of 30S ribosomal subunits. This is Ribosome maturation factor RimP from Cereibacter sphaeroides (strain ATCC 17029 / ATH 2.4.9) (Rhodobacter sphaeroides).